A 204-amino-acid polypeptide reads, in one-letter code: Thiamine-phosphate synthase (204 aa).

4-amino-2-methyl-5-(diphosphooxymethyl)pyrimidine-binding positions include 35-39 (QVREK) and asparagine 67. Mg(2+) is bound by residues aspartate 68 and aspartate 87. A 4-amino-2-methyl-5-(diphosphooxymethyl)pyrimidine-binding site is contributed by serine 106. 132-134 (TPT) is a binding site for 2-[(2R,5Z)-2-carboxy-4-methylthiazol-5(2H)-ylidene]ethyl phosphate. Lysine 135 is a binding site for 4-amino-2-methyl-5-(diphosphooxymethyl)pyrimidine. 2-[(2R,5Z)-2-carboxy-4-methylthiazol-5(2H)-ylidene]ethyl phosphate is bound by residues glycine 163 and 183 to 184 (VS).

The protein belongs to the thiamine-phosphate synthase family. The cofactor is Mg(2+).

The enzyme catalyses 2-[(2R,5Z)-2-carboxy-4-methylthiazol-5(2H)-ylidene]ethyl phosphate + 4-amino-2-methyl-5-(diphosphooxymethyl)pyrimidine + 2 H(+) = thiamine phosphate + CO2 + diphosphate. It catalyses the reaction 2-(2-carboxy-4-methylthiazol-5-yl)ethyl phosphate + 4-amino-2-methyl-5-(diphosphooxymethyl)pyrimidine + 2 H(+) = thiamine phosphate + CO2 + diphosphate. It carries out the reaction 4-methyl-5-(2-phosphooxyethyl)-thiazole + 4-amino-2-methyl-5-(diphosphooxymethyl)pyrimidine + H(+) = thiamine phosphate + diphosphate. Its pathway is cofactor biosynthesis; thiamine diphosphate biosynthesis; thiamine phosphate from 4-amino-2-methyl-5-diphosphomethylpyrimidine and 4-methyl-5-(2-phosphoethyl)-thiazole: step 1/1. Its function is as follows. Condenses 4-methyl-5-(beta-hydroxyethyl)thiazole monophosphate (THZ-P) and 2-methyl-4-amino-5-hydroxymethyl pyrimidine pyrophosphate (HMP-PP) to form thiamine monophosphate (TMP). The sequence is that of Thiamine-phosphate synthase from Vibrio campbellii (strain ATCC BAA-1116).